Here is a 357-residue protein sequence, read N- to C-terminus: Protein ATP1B4 (357 aa).

The Nuclear segment spans residues 1–110; sequence MRRQLRSRRA…FLARTGQSWS (110 aa). The segment at 15-80 is disordered; sequence YSYRYRLDDP…EEGQGQPTGN (66 aa). Over residues 52-73 the composition is skewed to acidic residues; the sequence is EEEEEEEEKEEEEEEEKEEEEG. Residues 111–131 form a helical; Signal-anchor for type II membrane protein membrane-spanning segment; the sequence is LILLIYFFFYASLAAVITLCM. Residues 132–357 lie on the Perinuclear space side of the membrane; that stretch reads YTLFLTISPY…RVIFTLNIET (226 aa).

Belongs to the X(+)/potassium ATPases subunit beta family. In terms of assembly, associates with a SMAD7-transcriptional complex. Interacts with SNW1 and TOR1AIP1. According to PubMed:17592128, does not associate with known Na,K-ATPase alpha-subunits. In terms of tissue distribution, highly expressed in skeletal muscle and at a lower level in heart.

It localises to the nucleus inner membrane. Its function is as follows. May act as a transcriptional coregulator during muscle development through its interaction with SNW1. Has lost its ancestral function as a Na,K-ATPase beta-subunit. The sequence is that of Protein ATP1B4 (ATP1B4) from Homo sapiens (Human).